The following is a 266-amino-acid chain: Putative carbamate hydrolase RutD (266 aa).

The protein belongs to the AB hydrolase superfamily. Hydrolase RutD family.

It catalyses the reaction carbamate + 2 H(+) = NH4(+) + CO2. Functionally, involved in pyrimidine catabolism. May facilitate the hydrolysis of carbamate, a reaction that can also occur spontaneously. The protein is Putative carbamate hydrolase RutD of Escherichia coli O26:H11 (strain 11368 / EHEC).